Consider the following 419-residue polypeptide: UDP-N-acetylglucosamine 1-carboxyvinyltransferase 2 (419 aa).

A phosphoenolpyruvate-binding site is contributed by lysine 24 to asparagine 25. Arginine 94 contributes to the UDP-N-acetyl-alpha-D-glucosamine binding site. Cysteine 118 acts as the Proton donor in catalysis. 2-(S-cysteinyl)pyruvic acid O-phosphothioketal is present on cysteine 118. Residues arginine 123–glutamine 127, aspartate 307, and isoleucine 329 contribute to the UDP-N-acetyl-alpha-D-glucosamine site.

Belongs to the EPSP synthase family. MurA subfamily.

Its subcellular location is the cytoplasm. It carries out the reaction phosphoenolpyruvate + UDP-N-acetyl-alpha-D-glucosamine = UDP-N-acetyl-3-O-(1-carboxyvinyl)-alpha-D-glucosamine + phosphate. It participates in cell wall biogenesis; peptidoglycan biosynthesis. In terms of biological role, cell wall formation. Adds enolpyruvyl to UDP-N-acetylglucosamine. The sequence is that of UDP-N-acetylglucosamine 1-carboxyvinyltransferase 2 from Staphylococcus aureus (strain bovine RF122 / ET3-1).